The sequence spans 303 residues: Haloalkane dehalogenase (303 aa).

In terms of domain architecture, AB hydrolase-1 spans 48–192 (PVLLLHGEPS…GTVTKLSQAV (145 aa)). The active-site Nucleophile is Asp-123. Asp-250 (proton donor) is an active-site residue. His-280 acts as the Proton acceptor in catalysis.

It belongs to the haloalkane dehalogenase family. Type 1 subfamily. Monomer.

The enzyme catalyses 1-haloalkane + H2O = a halide anion + a primary alcohol + H(+). Its function is as follows. Catalyzes hydrolytic cleavage of carbon-halogen bonds in halogenated aliphatic compounds, leading to the formation of the corresponding primary alcohols, halide ions and protons. This Psychrobacter cryohalolentis (strain ATCC BAA-1226 / DSM 17306 / VKM B-2378 / K5) protein is Haloalkane dehalogenase.